The chain runs to 166 residues: Ribosome maturation factor RimM (166 aa).

Residues 90 to 163 enclose the PRC barrel domain; that stretch reads EGQYFIKDII…KIVIKAVEEW (74 aa).

This sequence belongs to the RimM family. As to quaternary structure, binds ribosomal protein uS19.

It localises to the cytoplasm. An accessory protein needed during the final step in the assembly of 30S ribosomal subunit, possibly for assembly of the head region. Essential for efficient processing of 16S rRNA. May be needed both before and after RbfA during the maturation of 16S rRNA. It has affinity for free ribosomal 30S subunits but not for 70S ribosomes. This Clostridium acetobutylicum (strain ATCC 824 / DSM 792 / JCM 1419 / IAM 19013 / LMG 5710 / NBRC 13948 / NRRL B-527 / VKM B-1787 / 2291 / W) protein is Ribosome maturation factor RimM.